Reading from the N-terminus, the 178-residue chain is Sec-independent protein translocase protein TatB (178 aa).

The helical transmembrane segment at 1 to 21 (MFDIGWSELVVIAVVALIAIG) threads the bilayer. Over residues 77 to 86 (TSGNLMTKLT) the composition is skewed to polar residues. The segment at 77 to 178 (TSGNLMTKLT…HEAVKDAKAS (102 aa)) is disordered. The span at 93 to 102 (PKLEDLDKPA) shows a compositional bias: basic and acidic residues. Positions 155–165 (HATPEPAPATH) are enriched in low complexity. The span at 166 to 178 (ETPHEAVKDAKAS) shows a compositional bias: basic and acidic residues.

This sequence belongs to the TatB family. In terms of assembly, the Tat system comprises two distinct complexes: a TatABC complex, containing multiple copies of TatA, TatB and TatC subunits, and a separate TatA complex, containing only TatA subunits. Substrates initially bind to the TatABC complex, which probably triggers association of the separate TatA complex to form the active translocon.

It is found in the cell inner membrane. Functionally, part of the twin-arginine translocation (Tat) system that transports large folded proteins containing a characteristic twin-arginine motif in their signal peptide across membranes. Together with TatC, TatB is part of a receptor directly interacting with Tat signal peptides. TatB may form an oligomeric binding site that transiently accommodates folded Tat precursor proteins before their translocation. The polypeptide is Sec-independent protein translocase protein TatB (Nitrobacter hamburgensis (strain DSM 10229 / NCIMB 13809 / X14)).